The sequence spans 290 residues: UPF0761 membrane protein YihY (290 aa).

A run of 6 helical transmembrane segments spans residues leucine 44–phenylalanine 64, valine 104–leucine 124, phenylalanine 140–isoleucine 160, isoleucine 183–isoleucine 203, alanine 210–leucine 230, and valine 244–leucine 264.

It belongs to the UPF0761 family.

It localises to the cell inner membrane. This is UPF0761 membrane protein YihY from Shigella sonnei (strain Ss046).